The following is a 66-amino-acid chain: Putative membrane protein insertion efficiency factor (66 aa).

It belongs to the UPF0161 family.

It localises to the cell inner membrane. Could be involved in insertion of integral membrane proteins into the membrane. This is Putative membrane protein insertion efficiency factor from Parasynechococcus marenigrum (strain WH8102).